The sequence spans 492 residues: Bifunctional purine biosynthesis protein PurH (492 aa).

The 144-residue stretch at 1–144 (MKKAILSVSN…KNFKHVTTIV (144 aa)) folds into the MGS-like domain.

This sequence belongs to the PurH family.

It catalyses the reaction (6R)-10-formyltetrahydrofolate + 5-amino-1-(5-phospho-beta-D-ribosyl)imidazole-4-carboxamide = 5-formamido-1-(5-phospho-D-ribosyl)imidazole-4-carboxamide + (6S)-5,6,7,8-tetrahydrofolate. The enzyme catalyses IMP + H2O = 5-formamido-1-(5-phospho-D-ribosyl)imidazole-4-carboxamide. The protein operates within purine metabolism; IMP biosynthesis via de novo pathway; 5-formamido-1-(5-phospho-D-ribosyl)imidazole-4-carboxamide from 5-amino-1-(5-phospho-D-ribosyl)imidazole-4-carboxamide (10-formyl THF route): step 1/1. It functions in the pathway purine metabolism; IMP biosynthesis via de novo pathway; IMP from 5-formamido-1-(5-phospho-D-ribosyl)imidazole-4-carboxamide: step 1/1. The protein is Bifunctional purine biosynthesis protein PurH of Staphylococcus epidermidis (strain ATCC 35984 / DSM 28319 / BCRC 17069 / CCUG 31568 / BM 3577 / RP62A).